The chain runs to 415 residues: Adenosylhomocysteinase (415 aa).

Substrate-binding residues include threonine 53, aspartate 124, and glutamate 147. Residue 148–150 (TTT) participates in NAD(+) binding. Residues lysine 177 and aspartate 181 each contribute to the substrate site. Residues asparagine 182, 211–216 (GYGWVG), glutamate 234, asparagine 269, 290–292 (SGH), and asparagine 337 each bind NAD(+).

It belongs to the adenosylhomocysteinase family. It depends on NAD(+) as a cofactor.

It is found in the cytoplasm. The enzyme catalyses S-adenosyl-L-homocysteine + H2O = L-homocysteine + adenosine. The protein operates within amino-acid biosynthesis; L-homocysteine biosynthesis; L-homocysteine from S-adenosyl-L-homocysteine: step 1/1. Its function is as follows. May play a key role in the regulation of the intracellular concentration of adenosylhomocysteine. The chain is Adenosylhomocysteinase from Sulfurisphaera tokodaii (strain DSM 16993 / JCM 10545 / NBRC 100140 / 7) (Sulfolobus tokodaii).